A 489-amino-acid polypeptide reads, in one-letter code: UDP-N-acetylmuramate--L-alanine ligase (489 aa).

128-134 is an ATP binding site; sequence GTHGKTT.

It belongs to the MurCDEF family.

It is found in the cytoplasm. It carries out the reaction UDP-N-acetyl-alpha-D-muramate + L-alanine + ATP = UDP-N-acetyl-alpha-D-muramoyl-L-alanine + ADP + phosphate + H(+). The protein operates within cell wall biogenesis; peptidoglycan biosynthesis. Cell wall formation. This is UDP-N-acetylmuramate--L-alanine ligase from Shewanella pealeana (strain ATCC 700345 / ANG-SQ1).